The following is a 249-amino-acid chain: Fatty acid elongase 5 (249 aa).

Transmembrane regions (helical) follow at residues 23-43 (VFVN…VIVL), 68-88 (VALS…GVFN), and 100-120 (WIFV…FIVL). The HxxHH motif signature appears at 131–135 (HIYHH). The active-site Nucleophile is the His-134. The next 4 helical transmembrane spans lie at 138-158 (IGFI…AFFG), 159-179 (AWIN…TSLG), 193-213 (MIQF…HSPI), and 217-236 (WAVL…MRFY).

This sequence belongs to the ELO family.

It localises to the membrane. It catalyses the reaction an acyl-CoA + malonyl-CoA + H(+) = a 3-oxoacyl-CoA + CO2 + CoA. It functions in the pathway lipid metabolism; polyunsaturated fatty acid biosynthesis. Its function is as follows. Involved in the synthesis of fatty acids. Elongates C20 polyunsaturated fatty acids (PUFAs) with a preference for n-6 PUFAs. The sequence is that of Fatty acid elongase 5 from Leishmania major.